The following is a 357-amino-acid chain: UDP-N-acetylglucosamine--N-acetylmuramyl-(pentapeptide) pyrophosphoryl-undecaprenol N-acetylglucosamine transferase (357 aa).

Residues 14 to 16 (TGG), N126, R162, S190, I246, 265 to 270 (ALTVCE), and Q290 each bind UDP-N-acetyl-alpha-D-glucosamine.

Belongs to the glycosyltransferase 28 family. MurG subfamily.

The protein localises to the cell inner membrane. The enzyme catalyses di-trans,octa-cis-undecaprenyl diphospho-N-acetyl-alpha-D-muramoyl-L-alanyl-D-glutamyl-meso-2,6-diaminopimeloyl-D-alanyl-D-alanine + UDP-N-acetyl-alpha-D-glucosamine = di-trans,octa-cis-undecaprenyl diphospho-[N-acetyl-alpha-D-glucosaminyl-(1-&gt;4)]-N-acetyl-alpha-D-muramoyl-L-alanyl-D-glutamyl-meso-2,6-diaminopimeloyl-D-alanyl-D-alanine + UDP + H(+). Its pathway is cell wall biogenesis; peptidoglycan biosynthesis. Cell wall formation. Catalyzes the transfer of a GlcNAc subunit on undecaprenyl-pyrophosphoryl-MurNAc-pentapeptide (lipid intermediate I) to form undecaprenyl-pyrophosphoryl-MurNAc-(pentapeptide)GlcNAc (lipid intermediate II). This chain is UDP-N-acetylglucosamine--N-acetylmuramyl-(pentapeptide) pyrophosphoryl-undecaprenol N-acetylglucosamine transferase, found in Histophilus somni (strain 129Pt) (Haemophilus somnus).